The following is a 251-amino-acid chain: Triosephosphate isomerase (251 aa).

Substrate is bound at residue 9–11; the sequence is NWK. Catalysis depends on H95, which acts as the Electrophile. E167 functions as the Proton acceptor in the catalytic mechanism. Residues G173, S212, and 233–234 contribute to the substrate site; that span reads GG.

This sequence belongs to the triosephosphate isomerase family. As to quaternary structure, homodimer.

The protein localises to the cytoplasm. The enzyme catalyses D-glyceraldehyde 3-phosphate = dihydroxyacetone phosphate. It functions in the pathway carbohydrate biosynthesis; gluconeogenesis. Its pathway is carbohydrate degradation; glycolysis; D-glyceraldehyde 3-phosphate from glycerone phosphate: step 1/1. Functionally, involved in the gluconeogenesis. Catalyzes stereospecifically the conversion of dihydroxyacetone phosphate (DHAP) to D-glyceraldehyde-3-phosphate (G3P). This chain is Triosephosphate isomerase, found in Pseudomonas entomophila (strain L48).